Reading from the N-terminus, the 82-residue chain is Acyl carrier protein (82 aa).

Positions 4 to 79 (PEMEERLRKI…DALNYLETHQ (76 aa)) constitute a Carrier domain. Ser-39 carries the O-(pantetheine 4'-phosphoryl)serine modification.

It belongs to the acyl carrier protein (ACP) family. In terms of processing, 4'-phosphopantetheine is transferred from CoA to a specific serine of apo-ACP by AcpS. This modification is essential for activity because fatty acids are bound in thioester linkage to the sulfhydryl of the prosthetic group.

Its subcellular location is the cytoplasm. Its pathway is lipid metabolism; fatty acid biosynthesis. Carrier of the growing fatty acid chain in fatty acid biosynthesis. The chain is Acyl carrier protein from Chloroflexus aurantiacus (strain ATCC 29366 / DSM 635 / J-10-fl).